Here is a 368-residue protein sequence, read N- to C-terminus: N-acetylneuraminate epimerase (368 aa).

The first 19 residues, 1–19 (MNKTITALAILMASFAANA), serve as a signal peptide directing secretion. Kelch repeat units lie at residues 40 to 84 (TVYI…AFID), 86 to 137 (NLYV…FVHN), 139 to 173 (KAYVTGGVNQNIFNGYFEDLNEAGKDSTAVDKINA), 174 to 219 (HYFD…VNKG), 222 to 265 (TWLI…VAGG), 287 to 336 (ENYQ…PWNN), and 338 to 367 (LLIIGGETAGGKAVTDSVLISVKDNKVTVQ). The active-site Proton acceptor is the Glu-228.

This sequence belongs to the NanM family. Homodimer.

The protein resides in the periplasm. It catalyses the reaction N-acetyl-alpha-neuraminate = N-acetyl-beta-neuraminate. In terms of biological role, converts alpha-N-acetylneuranimic acid (Neu5Ac) to the beta-anomer, accelerating the equilibrium between the alpha- and beta-anomers. Probably facilitates sialidase-negative bacteria to compete successfully for limited amounts of extracellular Neu5Ac, which is likely taken up in the beta-anomer. In addition, the rapid removal of sialic acid from solution might be advantageous to the bacterium to damp down host responses. The polypeptide is N-acetylneuraminate epimerase (Escherichia coli O157:H7).